The chain runs to 506 residues: DEAD-box ATP-dependent RNA helicase CshA (506 aa).

The Q motif motif lies at 2–30; the sequence is QNFKELGISDNTVQSLESMGFKEPTPIQK. The Helicase ATP-binding domain maps to 33 to 203; the sequence is IPYALQGIDI…QQFMKSPKII (171 aa). 46–53 serves as a coordination point for ATP; sequence AQTGTGKT. A DEAD box motif is present at residues 150 to 153; it reads DEAD. In terms of domain architecture, Helicase C-terminal spans 214–375; the sequence is QIEEFYTIVK…LRPPHRKEVL (162 aa). Residues 436–506 form a disordered region; sequence EKPLSRKGRN…KGRTFADHQK (71 aa). Residues 468–480 are compositionally biased toward basic residues; the sequence is KRSKGYSSKKKST.

It belongs to the DEAD box helicase family. CshA subfamily. As to quaternary structure, oligomerizes, may be a member of the RNA degradosome.

It is found in the cytoplasm. The enzyme catalyses ATP + H2O = ADP + phosphate + H(+). Functionally, DEAD-box RNA helicase possibly involved in RNA degradation. Unwinds dsRNA in both 5'- and 3'-directions, has RNA-dependent ATPase activity. This chain is DEAD-box ATP-dependent RNA helicase CshA, found in Staphylococcus aureus (strain MRSA252).